The following is an 837-amino-acid chain: Protein translocase subunit SecA 1 (837 aa).

Residues Gln85, 103 to 107 (GEGKT), and Asp493 contribute to the ATP site. Zn(2+) contacts are provided by Cys821, Cys823, Cys832, and His833.

The protein belongs to the SecA family. In terms of assembly, monomer and homodimer. Part of the essential Sec protein translocation apparatus which comprises SecA, SecYEG and auxiliary proteins SecDF. Other proteins may also be involved. Requires Zn(2+) as cofactor.

It is found in the cell membrane. It localises to the cytoplasm. The catalysed reaction is ATP + H2O + cellular proteinSide 1 = ADP + phosphate + cellular proteinSide 2.. Part of the Sec protein translocase complex. Interacts with the SecYEG preprotein conducting channel. Has a central role in coupling the hydrolysis of ATP to the transfer of proteins into and across the cell membrane, serving as an ATP-driven molecular motor driving the stepwise translocation of polypeptide chains across the membrane. This Streptococcus pneumoniae serotype 4 (strain ATCC BAA-334 / TIGR4) protein is Protein translocase subunit SecA 1.